The primary structure comprises 372 residues: High-affinity lysophosphatidic acid receptor (372 aa).

Residues 1 to 38 (MGCNNTALDNCMLPNLSIATAPLDLRFAFSTPLRMLLA) lie on the Extracellular side of the membrane. Residues asparagine 4 and asparagine 15 are each glycosylated (N-linked (GlcNAc...) asparagine). Residues 39 to 59 (IIMILMIAIAFLGNAIVCLIV) traverse the membrane as a helical segment. Residues 60–80 (YQKPAMRSAINLLLATLAFSD) lie on the Cytoplasmic side of the membrane. The chain crosses the membrane as a helical span at residues 81–101 (IMLSLFCMPFTAVTIITGSWL). Over 102 to 108 (FGTQFCQ) the chain is Extracellular. A helical membrane pass occupies residues 109-129 (ISAMLYWFFVLEGVAILLIIS). Residues 130–149 (VDRFLIIVQRQDKLNPHRAK) are Cytoplasmic-facing. Residues 150–170 (IMIAASWVLSFCISLPSVVGW) traverse the membrane as a helical segment. The Extracellular segment spans residues 171–198 (TLVEVPTRAPQCVLGYTEFSADRVYAVM). A helical membrane pass occupies residues 199–219 (LIVAVFFIPFSVMLYSYLCIL). Topologically, residues 220-268 (NTVRRNAVRIHTHADSLCLSQVSKLGLMGLQRPHQMNVDMSFKTRAFTT) are cytoplasmic. The chain crosses the membrane as a helical span at residues 269–289 (ILILFIGFSLCWLPHSVFSLL). Residues 290 to 301 (SVFSRTFYYSSS) lie on the Extracellular side of the membrane. Residues 302–324 (FYSISTCTLWLTYLKSVFNPVIY) form a helical membrane-spanning segment. At 325 to 372 (CWRIKKFREACLEFMPKTFKILPNVRGRTRRRIRPSTIYVCGEHQSAV) the chain is on the cytoplasmic side.

It belongs to the G-protein coupled receptor 1 family. As to expression, ubiquitously expressed.

The protein resides in the cell membrane. In terms of biological role, highly selective receptor for lysophosphatidic acid (LPA), a mediator of diverse cellular activities. This is High-affinity lysophosphatidic acid receptor from Xenopus laevis (African clawed frog).